Reading from the N-terminus, the 134-residue chain is Putative nickel-responsive regulator (134 aa).

Residues His-78, His-89, His-91, and Cys-97 each contribute to the Ni(2+) site.

The protein belongs to the transcriptional regulatory CopG/NikR family. Ni(2+) is required as a cofactor.

In terms of biological role, transcriptional regulator. This is Putative nickel-responsive regulator from Chlorobium limicola (strain DSM 245 / NBRC 103803 / 6330).